We begin with the raw amino-acid sequence, 109 residues long: Guanylin (109 aa).

Positions 1–21 are cleaved as a signal peptide; sequence MNTFLFPTLCLLGVWAALAGG. The propeptide occupies 22 to 94; that stretch reads VTVKDGEFSF…LERLETIAQD (73 aa). Cystine bridges form between Cys-63–Cys-76, Cys-98–Cys-106, and Cys-101–Cys-109.

The protein belongs to the guanylin family.

The protein resides in the secreted. Endogenous activator of intestinal guanylate cyclase. It stimulates this enzyme through the same receptor binding region as the heat-stable enterotoxins. The sequence is that of Guanylin (GUCA2A) from Sus scrofa (Pig).